The chain runs to 119 residues: Small ribosomal subunit protein uS13 (119 aa).

A disordered region spans residues 93 to 119 (RRGLPLRGQRTRSNARTRKGKRKPIRS).

This sequence belongs to the universal ribosomal protein uS13 family. Part of the 30S ribosomal subunit. Forms a loose heterodimer with protein S19. Forms two bridges to the 50S subunit in the 70S ribosome.

In terms of biological role, located at the top of the head of the 30S subunit, it contacts several helices of the 16S rRNA. In the 70S ribosome it contacts the 23S rRNA (bridge B1a) and protein L5 of the 50S subunit (bridge B1b), connecting the 2 subunits; these bridges are implicated in subunit movement. Contacts the tRNAs in the A and P-sites. In Coxiella burnetii (strain RSA 493 / Nine Mile phase I), this protein is Small ribosomal subunit protein uS13.